The chain runs to 363 residues: 2,5-diketocamphane 1,2-monooxygenase 2 (363 aa).

FMN contacts are provided by residues Met74 and 186-194 (TGLTKNSSS).

The protein belongs to the bacterial luciferase oxidoreductase family. As to quaternary structure, homodimer. Likely forms a loose transient complex with a P.putida flavin reductase that provides the required FMNH(2) to the enzyme.

It catalyses the reaction (1R,4R)-bornane-2,5-dione + FMNH2 + O2 = (1R,4R)-5-oxo-1,2-campholide + FMN + H2O + H(+). Its pathway is terpene metabolism; (R)-camphor degradation. Its function is as follows. Involved in the degradation and assimilation of (+)-camphor, which allows P.putida strain NCIMB 10007 to grow on this enantiomer of camphor as the sole carbon source. Catalyzes the FMNH(2)-dependent lactonization of 2,5-diketocamphane via a Baeyer-Villiger oxidation to produce the unstable lactone 5-oxo-1,2-campholide with (R,R) configuration, that presumably undergoes spontaneous hydrolysis to form 2-oxo-Delta(3)-4,5,5-trimethylcyclopentenylacetate. Is also able to convert (+)-camphor and norcamphor to the corresponding lactone in vitro. Shows no conversion of (-)-camphor, (+)-fenchone, (-)-fenchone, and (+)-nopinone. Acts on other bicyclic ketones and, to a lesser extent, on some 2- and 4-substituted monocyclic ketones. In Pseudomonas putida (Arthrobacter siderocapsulatus), this protein is 2,5-diketocamphane 1,2-monooxygenase 2.